The chain runs to 287 residues: Light-independent protochlorophyllide reductase iron-sulfur ATP-binding protein (287 aa).

Residues 10-15 (GIGKST) and lysine 39 each bind ATP. Residue serine 14 participates in Mg(2+) binding. [4Fe-4S] cluster contacts are provided by cysteine 95 and cysteine 129. Residue 180–181 (NR) participates in ATP binding.

This sequence belongs to the NifH/BchL/ChlL family. Homodimer. Protochlorophyllide reductase is composed of three subunits; ChlL, ChlN and ChlB. [4Fe-4S] cluster serves as cofactor.

It is found in the plastid. Its subcellular location is the chloroplast. The enzyme catalyses chlorophyllide a + oxidized 2[4Fe-4S]-[ferredoxin] + 2 ADP + 2 phosphate = protochlorophyllide a + reduced 2[4Fe-4S]-[ferredoxin] + 2 ATP + 2 H2O. Its pathway is porphyrin-containing compound metabolism; chlorophyll biosynthesis (light-independent). In terms of biological role, component of the dark-operative protochlorophyllide reductase (DPOR) that uses Mg-ATP and reduced ferredoxin to reduce ring D of protochlorophyllide (Pchlide) to form chlorophyllide a (Chlide). This reaction is light-independent. The L component serves as a unique electron donor to the NB-component of the complex, and binds Mg-ATP. The protein is Light-independent protochlorophyllide reductase iron-sulfur ATP-binding protein of Nephroselmis olivacea (Green alga).